Consider the following 192-residue polypeptide: Ion-translocating oxidoreductase complex subunit A (192 aa).

6 helical membrane passes run Leu-5–Leu-25, Ile-39–Val-59, Leu-72–Val-92, Ala-102–Leu-122, Ala-134–Met-154, and Ala-171–Val-191.

It belongs to the NqrDE/RnfAE family. The complex is composed of six subunits: RnfA, RnfB, RnfC, RnfD, RnfE and RnfG.

It is found in the cell inner membrane. Its function is as follows. Part of a membrane-bound complex that couples electron transfer with translocation of ions across the membrane. The protein is Ion-translocating oxidoreductase complex subunit A of Shewanella loihica (strain ATCC BAA-1088 / PV-4).